A 339-amino-acid chain; its full sequence is Ferrochelatase (339 aa).

Fe cation-binding residues include His-209 and Glu-290.

It belongs to the ferrochelatase family.

It is found in the cytoplasm. It catalyses the reaction heme b + 2 H(+) = protoporphyrin IX + Fe(2+). The protein operates within porphyrin-containing compound metabolism; protoheme biosynthesis; protoheme from protoporphyrin-IX: step 1/1. In terms of biological role, catalyzes the ferrous insertion into protoporphyrin IX. In Rhizobium meliloti (strain 1021) (Ensifer meliloti), this protein is Ferrochelatase.